A 295-amino-acid polypeptide reads, in one-letter code: Glycine N-acyltransferase-like protein Keg1 (295 aa).

The residue at position 41 (K41) is an N6-acetyllysine; alternate. N6-succinyllysine; alternate is present on K41. K43 carries the post-translational modification N6-acetyllysine. N6-acetyllysine; alternate is present on K48. K48 is modified (N6-succinyllysine; alternate). N6-acetyllysine occurs at positions 80 and 83. K124, K128, and K140 each carry N6-acetyllysine; alternate. K124, K128, and K140 each carry N6-succinyllysine; alternate. K150 carries the post-translational modification N6-acetyllysine. Residue K255 is modified to N6-acetyllysine; alternate. K255 is modified (N6-succinyllysine; alternate).

It belongs to the glycine N-acyltransferase family. In terms of assembly, binds to microtubules.

The protein resides in the cytoplasm. The protein localises to the cytoskeleton. It localises to the microtubule organizing center. It is found in the centrosome. It carries out the reaction an acyl-CoA + glycine = an N-acylglycine + CoA + H(+). In terms of biological role, acyltransferase which transfers the acyl group to the N-terminus of glycine. Can conjugate a multitude of substrates to form a variety of N-acylglycines. This Mus musculus (Mouse) protein is Glycine N-acyltransferase-like protein Keg1 (Keg1).